Consider the following 329-residue polypeptide: Olfactory receptor 5AL1 (329 aa).

At 1 to 44 (MCALKGFLEENFYTYSVAKGNHSTVYEFILLGLTDNAELQVTLF) the chain is on the extracellular side. An N-linked (GlcNAc...) asparagine glycan is attached at Asn21. Residues 45–65 (GIFLVVYLASFMGNFGLIMLI) traverse the membrane as a helical segment. The Cytoplasmic portion of the chain corresponds to 66–73 (QISPQLHT). The helical transmembrane segment at 74-94 (PMYFFLSHLAFVDFSFTSSVA) threads the bilayer. Topologically, residues 95-113 (PNTLVNFLCEVKSITFYAC) are extracellular. A disulfide bond links Cys113 and Cys205. Residues 114–134 (AIQVCCFITFVVCELYLLSIM) form a helical membrane-spanning segment. The Cytoplasmic portion of the chain corresponds to 135 to 157 (AYDRYVAICNPLLYVILIPRKLC). A helical membrane pass occupies residues 158 to 178 (IKLIASTYVYGFTVGLVQTVA). Residues 179 to 220 (TSYLSFCDSNVINHFYHDDVPLVALACSDTHVKELMLLIIAG) are Extracellular-facing. Residues 221 to 241 (FNTLCSLVIVLISYGFIFFAI) traverse the membrane as a helical segment. At 242-253 (LRIHSAEGRQKA) the chain is on the cytoplasmic side. A helical membrane pass occupies residues 254 to 274 (FSTSASHLTSITIFYGTIIFM). Topologically, residues 275-287 (YPQPKSSHSLNMD) are extracellular. The chain crosses the membrane as a helical span at residues 288-308 (KVASVFNVVVIPTLNPLIYSL). The Cytoplasmic segment spans residues 309–329 (RNQEVKNALKRIIEKLCLAVK).

Belongs to the G-protein coupled receptor 1 family.

It localises to the cell membrane. Odorant receptor. This Homo sapiens (Human) protein is Olfactory receptor 5AL1 (OR5AL1).